The sequence spans 697 residues: Potassium-transporting ATPase ATP-binding subunit (697 aa).

Helical transmembrane passes span 55–75 (PIMF…FLPS), 79–99 (SIPG…VLFA), 245–265 (LTLI…YLGF), and 271–291 (VLVA…LSAI). D324 (4-aspartylphosphate intermediate) is an active-site residue. ATP is bound by residues D361, E365, 393-400 (FKAETRMS), and K412. Residues D535 and D539 each contribute to the Mg(2+) site. 3 helical membrane-spanning segments follow: residues 605 to 625 (FAII…LNIM), 633 to 653 (AILS…PLAM), and 677 to 697 (GGVI…GLFI).

Belongs to the cation transport ATPase (P-type) (TC 3.A.3) family. Type IA subfamily. The system is composed of three essential subunits: KdpA, KdpB and KdpC.

It is found in the cell membrane. The catalysed reaction is K(+)(out) + ATP + H2O = K(+)(in) + ADP + phosphate + H(+). Its function is as follows. Part of the high-affinity ATP-driven potassium transport (or Kdp) system, which catalyzes the hydrolysis of ATP coupled with the electrogenic transport of potassium into the cytoplasm. This subunit is responsible for energy coupling to the transport system and for the release of the potassium ions to the cytoplasm. The sequence is that of Potassium-transporting ATPase ATP-binding subunit from Bacillus cereus (strain ZK / E33L).